Consider the following 83-residue polypeptide: Exodeoxyribonuclease 7 small subunit (83 aa).

This sequence belongs to the XseB family. Heterooligomer composed of large and small subunits.

It is found in the cytoplasm. The catalysed reaction is Exonucleolytic cleavage in either 5'- to 3'- or 3'- to 5'-direction to yield nucleoside 5'-phosphates.. Its function is as follows. Bidirectionally degrades single-stranded DNA into large acid-insoluble oligonucleotides, which are then degraded further into small acid-soluble oligonucleotides. In Nitrobacter winogradskyi (strain ATCC 25391 / DSM 10237 / CIP 104748 / NCIMB 11846 / Nb-255), this protein is Exodeoxyribonuclease 7 small subunit.